A 760-amino-acid chain; its full sequence is Xaa-Pro dipeptidyl-peptidase (760 aa).

Active-site charge relay system residues include S349, D469, and H499.

Belongs to the peptidase S15 family. Homodimer.

Its subcellular location is the cytoplasm. The enzyme catalyses Hydrolyzes Xaa-Pro-|- bonds to release unblocked, N-terminal dipeptides from substrates including Ala-Pro-|-p-nitroanilide and (sequentially) Tyr-Pro-|-Phe-Pro-|-Gly-Pro-|-Ile.. Functionally, removes N-terminal dipeptides sequentially from polypeptides having unsubstituted N-termini provided that the penultimate residue is proline. The chain is Xaa-Pro dipeptidyl-peptidase from Streptococcus pyogenes serotype M18 (strain MGAS8232).